Reading from the N-terminus, the 843-residue chain is Neuroligin-1 (843 aa).

Positions 1–45 (MALPRCMWPNYVWRAMMACVVHRGSGAPLTLCLLGCLLQTFHVLS) are cleaved as a signal peptide. The Extracellular portion of the chain corresponds to 46–697 (QKLDDVDPLV…DQRDYSTELS (652 aa)). N-linked (GlcNAc...) (complex) asparagine glycosylation occurs at Asn-109. The cysteines at positions 117 and 153 are disulfide-linked. Residues 167–190 (LTKKHTDDLGDNDGAEDEDIRDSG) are disordered. The span at 175 to 186 (LGDNDGAEDEDI) shows a compositional bias: acidic residues. 2 N-linked (GlcNAc...) (complex) asparagine glycosylation sites follow: Asn-303 and Asn-343. 2 cysteine pairs are disulfide-bonded: Cys-342/Cys-353 and Cys-512/Cys-546. Asn-547 is a glycosylation site (N-linked (GlcNAc...) asparagine). The tract at residues 647–688 (TKVPSTDITLRPTRKNSTPVTSAFPTAKQDDPKQQPSPFSVD) is disordered. A compositionally biased stretch (polar residues) spans 661-670 (KNSTPVTSAF). O-linked (GalNAc...) serine glycosylation is found at Ser-683 and Ser-686. Residues 698–718 (VTIAVGASLLFLNILAFAALY) traverse the membrane as a helical segment. The Cytoplasmic portion of the chain corresponds to 719–843 (YKKDKRRHDV…HPHSHSTTRV (125 aa)). A disordered region spans residues 822–843 (GGQNNTLPHPHPHPHSHSTTRV). Residues 831 to 843 (PHPHPHSHSTTRV) are compositionally biased toward basic residues.

This sequence belongs to the type-B carboxylesterase/lipase family. Interacts with neurexins NRXN1, NRXN2 and NRXN3. Interaction with neurexins is mediated by heparan sulfate glycan modification on neurexin. Interacts (via its C-terminus) with DLG4/PSD-95 (via PDZ domain 3). Interacts with AIP1, GOPC and PDZRN3. Interacts with NLGN3. In terms of tissue distribution, brain and arteries (at protein level). Expressed in olfactory bulb. Detected in brain.

It localises to the cell membrane. The protein resides in the postsynaptic density. It is found in the synaptic cleft. The protein localises to the synaptic cell membrane. Functionally, cell surface protein involved in cell-cell-interactions via its interactions with neurexin family members. Plays a role in synapse function and synaptic signal transmission, and probably mediates its effects by recruiting and clustering other synaptic proteins. May promote the initial formation of synapses, but is not essential for this. In vitro, triggers the de novo formation of presynaptic structures. May be involved in specification of excitatory synapses. Required to maintain wakefulness quality and normal synchrony of cerebral cortex activity during wakefulness and sleep. The protein is involved in nervous system development. The polypeptide is Neuroligin-1 (Nlgn1) (Mus musculus (Mouse)).